Here is a 156-residue protein sequence, read N- to C-terminus: Crossover junction endodeoxyribonuclease RuvC (156 aa).

Catalysis depends on residues aspartate 7, glutamate 67, and aspartate 139. 3 residues coordinate Mg(2+): aspartate 7, glutamate 67, and aspartate 139.

It belongs to the RuvC family. As to quaternary structure, homodimer which binds Holliday junction (HJ) DNA. The HJ becomes 2-fold symmetrical on binding to RuvC with unstacked arms; it has a different conformation from HJ DNA in complex with RuvA. In the full resolvosome a probable DNA-RuvA(4)-RuvB(12)-RuvC(2) complex forms which resolves the HJ. Mg(2+) serves as cofactor.

Its subcellular location is the cytoplasm. The enzyme catalyses Endonucleolytic cleavage at a junction such as a reciprocal single-stranded crossover between two homologous DNA duplexes (Holliday junction).. The RuvA-RuvB-RuvC complex processes Holliday junction (HJ) DNA during genetic recombination and DNA repair. Endonuclease that resolves HJ intermediates. Cleaves cruciform DNA by making single-stranded nicks across the HJ at symmetrical positions within the homologous arms, yielding a 5'-phosphate and a 3'-hydroxyl group; requires a central core of homology in the junction. The consensus cleavage sequence is 5'-(A/T)TT(C/G)-3'. Cleavage occurs on the 3'-side of the TT dinucleotide at the point of strand exchange. HJ branch migration catalyzed by RuvA-RuvB allows RuvC to scan DNA until it finds its consensus sequence, where it cleaves and resolves the cruciform DNA. The protein is Crossover junction endodeoxyribonuclease RuvC of Sphingopyxis alaskensis (strain DSM 13593 / LMG 18877 / RB2256) (Sphingomonas alaskensis).